Reading from the N-terminus, the 764-residue chain is 5-methyltetrahydropteroyltriglutamate--homocysteine methyltransferase (764 aa).

Residues 16–19 (RELK) and lysine 121 each bind 5-methyltetrahydropteroyltri-L-glutamate. Residues 440 to 442 (IGS) and glutamate 493 contribute to the L-homocysteine site. L-methionine is bound by residues 440 to 442 (IGS) and glutamate 493. 5-methyltetrahydropteroyltri-L-glutamate is bound by residues 524–525 (RC) and tryptophan 570. L-homocysteine is bound at residue aspartate 608. Aspartate 608 lines the L-methionine pocket. Glutamate 614 is a 5-methyltetrahydropteroyltri-L-glutamate binding site. Histidine 650, cysteine 652, and glutamate 674 together coordinate Zn(2+). The active-site Proton donor is histidine 703. Cysteine 735 provides a ligand contact to Zn(2+).

This sequence belongs to the vitamin-B12 independent methionine synthase family. Zn(2+) is required as a cofactor.

It carries out the reaction 5-methyltetrahydropteroyltri-L-glutamate + L-homocysteine = tetrahydropteroyltri-L-glutamate + L-methionine. It participates in amino-acid biosynthesis; L-methionine biosynthesis via de novo pathway; L-methionine from L-homocysteine (MetE route): step 1/1. Catalyzes the transfer of a methyl group from 5-methyltetrahydrofolate to homocysteine resulting in methionine formation. This Burkholderia cenocepacia (strain HI2424) protein is 5-methyltetrahydropteroyltriglutamate--homocysteine methyltransferase.